A 285-amino-acid chain; its full sequence is Ribosomal RNA small subunit methyltransferase A (285 aa).

Residues Asn30, Leu32, Gly57, Glu78, Asp101, and Asn121 each contribute to the S-adenosyl-L-methionine site.

The protein belongs to the class I-like SAM-binding methyltransferase superfamily. rRNA adenine N(6)-methyltransferase family. RsmA subfamily.

It is found in the cytoplasm. It carries out the reaction adenosine(1518)/adenosine(1519) in 16S rRNA + 4 S-adenosyl-L-methionine = N(6)-dimethyladenosine(1518)/N(6)-dimethyladenosine(1519) in 16S rRNA + 4 S-adenosyl-L-homocysteine + 4 H(+). Specifically dimethylates two adjacent adenosines (A1518 and A1519) in the loop of a conserved hairpin near the 3'-end of 16S rRNA in the 30S particle. May play a critical role in biogenesis of 30S subunits. The chain is Ribosomal RNA small subunit methyltransferase A from Treponema pallidum (strain Nichols).